Reading from the N-terminus, the 800-residue chain is U4/U6.U5 tri-snRNP-associated protein 1 (800 aa).

Positions 1–120 (MGSSKKHRGE…SSGDASSLSI (120 aa)) are disordered. Residues 32 to 42 (HREHKKHKHRS) show a composition bias toward basic residues. Basic and acidic residues predominate over residues 58–101 (ERGGERGSGRRGAEAEARSSTHGRERSQAEPSERRVKREKRDDG). A compositionally biased stretch (low complexity) spans 104 to 119 (AAASSKTSSGDASSLS). Glycyl lysine isopeptide (Lys-Gly) (interchain with G-Cter in SUMO2) cross-links involve residues Lys-125 and Lys-133. Lys-141 participates in a covalent cross-link: Glycyl lysine isopeptide (Lys-Gly) (interchain with G-Cter in SUMO1); alternate. Lys-141 is covalently cross-linked (Glycyl lysine isopeptide (Lys-Gly) (interchain with G-Cter in SUMO2); alternate). Glycyl lysine isopeptide (Lys-Gly) (interchain with G-Cter in SUMO2) cross-links involve residues Lys-147 and Lys-188. Residues 157–231 (NPMALRQREE…KLLEEMDQEF (75 aa)) adopt a coiled-coil conformation. The residue at position 189 (Thr-189) is a Phosphothreonine. A Glycyl lysine isopeptide (Lys-Gly) (interchain with G-Cter in SUMO2) cross-link involves residue Lys-277. Residues 311–330 (PDYLPYAEDESVDDLAQQKP) form a disordered region. At Ser-321 the chain carries Phosphoserine. Residues Lys-329 and Lys-336 each participate in a glycyl lysine isopeptide (Lys-Gly) (interchain with G-Cter in SUMO2) cross-link. A Phosphoserine modification is found at Ser-348. At Thr-392 the chain carries Phosphothreonine. Glycyl lysine isopeptide (Lys-Gly) (interchain with G-Cter in SUMO2) cross-links involve residues Lys-400 and Lys-414. The tract at residues 419–497 (RADDLLPLGD…QVLEEDEAEL (79 aa)) is disordered. Thr-430 is modified (phosphothreonine). Phosphoserine occurs at positions 448, 474, 486, and 521. Positions 490–533 (LEEDEAELELQKQLEKGRRLRQLQQLQQLRDSGEKVVEIVKKLE) form a coiled coil. A Glycyl lysine isopeptide (Lys-Gly) (interchain with G-Cter in SUMO2) cross-link involves residue Lys-548. The interval 571-604 (LAGNREEQEELMDFERDEERSANGGSESDGEENI) is disordered. Residues Ser-591, Ser-596, Ser-598, and Ser-621 each carry the phosphoserine modification. Residues Lys-648, Lys-657, and Lys-684 each participate in a glycyl lysine isopeptide (Lys-Gly) (interchain with G-Cter in SUMO2) cross-link. Thr-695 bears the Phosphothreonine mark. Glycyl lysine isopeptide (Lys-Gly) (interchain with G-Cter in SUMO2) cross-links involve residues Lys-699, Lys-709, Lys-723, Lys-749, and Lys-758. Ser-761 is modified (phosphoserine). Position 764 is a phosphothreonine (Thr-764). Residues Lys-775 and Lys-780 each participate in a glycyl lysine isopeptide (Lys-Gly) (interchain with G-Cter in SUMO2) cross-link. A Phosphoserine modification is found at Ser-789. Residue Lys-791 forms a Glycyl lysine isopeptide (Lys-Gly) (interchain with G-Cter in SUMO2) linkage.

Belongs to the SNU66/SART1 family. As to quaternary structure, identified in the spliceosome C complex. Component of the U4/U6-U5 tri-snRNP complex composed of the U4, U6 and U5 snRNAs and at least PRPF3, PRPF4, PRPF6, PRPF8, PRPF31, SNRNP200, TXNL4A, SNRNP40, DDX23, CD2BP2, PPIH, SNU13, EFTUD2, SART1 and USP39. Interacts with UBL5. Interacts with IVNS1ABP (via Kelch repeats). In terms of processing, sumoylated with SUMO2. As to expression, ubiquitously expressed.

It localises to the nucleus. In terms of biological role, plays a role in mRNA splicing as a component of the U4/U6-U5 tri-snRNP, one of the building blocks of the spliceosome. May also bind to DNA. This chain is U4/U6.U5 tri-snRNP-associated protein 1 (SART1), found in Homo sapiens (Human).